The primary structure comprises 330 residues: Methylthioribose-1-phosphate isomerase (330 aa).

Substrate-binding positions include 49–51, Arg-83, and Gln-179; that span reads RGA. Asp-220 functions as the Proton donor in the catalytic mechanism. 230–231 is a substrate binding site; sequence NK.

The protein belongs to the eIF-2B alpha/beta/delta subunits family. MtnA subfamily.

The catalysed reaction is 5-(methylsulfanyl)-alpha-D-ribose 1-phosphate = 5-(methylsulfanyl)-D-ribulose 1-phosphate. Its pathway is amino-acid biosynthesis; L-methionine biosynthesis via salvage pathway; L-methionine from S-methyl-5-thio-alpha-D-ribose 1-phosphate: step 1/6. Catalyzes the interconversion of methylthioribose-1-phosphate (MTR-1-P) into methylthioribulose-1-phosphate (MTRu-1-P). The protein is Methylthioribose-1-phosphate isomerase of Thermus thermophilus (strain ATCC BAA-163 / DSM 7039 / HB27).